Reading from the N-terminus, the 493-residue chain is Activin receptor type-1C (493 aa).

An N-terminal signal peptide occupies residues Met-1–Gly-25. Over Leu-26–Glu-113 the chain is Extracellular. A helical membrane pass occupies residues Leu-114 to Trp-134. Residues Ala-135–Ala-493 are Cytoplasmic-facing. In terms of domain architecture, GS spans Lys-165–Thr-194. The region spanning Ile-195–Leu-485 is the Protein kinase domain. ATP contacts are provided by residues Val-201 to Val-209 and Lys-222. Asp-323 acts as the Proton acceptor in catalysis.

Belongs to the protein kinase superfamily. TKL Ser/Thr protein kinase family. TGFB receptor subfamily. Binds the type 2 receptor protein ACVR2A. Requires Mg(2+) as cofactor. Mn(2+) is required as a cofactor. Expressed in brain, kidney, lung, liver, testis, ovary, adrenal gland, heart, prostate, gastrointestinal tract, and spleen. Distributed throughout both adult and embryonic central nervous system and pancreatic islet cells.

It is found in the membrane. The enzyme catalyses L-threonyl-[receptor-protein] + ATP = O-phospho-L-threonyl-[receptor-protein] + ADP + H(+). It carries out the reaction L-seryl-[receptor-protein] + ATP = O-phospho-L-seryl-[receptor-protein] + ADP + H(+). Its function is as follows. Serine/threonine protein kinase which forms a receptor complex on ligand binding. The receptor complex consists of 2 type II and 2 type I transmembrane serine/threonine kinases. Type II receptors phosphorylate and activate type I receptors which autophosphorylate, then bind and activate SMAD transcriptional regulators, SMAD2 and SMAD3. Receptor for activin AB, activin B, activin E and NODAL. Upon NODAL binding, activation results in increased apoptosis and reduced proliferation through suppression of AKT signaling and the activation of Smad2-dependent signaling pathway in pancreatic beta-cells, trophoblasts, epithelial or neuronal cells. Acts as a positive regulator for macrophage activation partially through down-regulation of PPARG expression. This Rattus norvegicus (Rat) protein is Activin receptor type-1C.